Reading from the N-terminus, the 250-residue chain is Peptidyl-tRNA hydrolase (250 aa).

TRNA is bound at residue Y14. The Proton acceptor role is filled by H19. 3 residues coordinate tRNA: F64, N66, and N112. Positions 192–250 (MGDGNQRPGGVKTDPAQLEKAPPKAQSHIRQARQNQKKPNIPESGPMAEMLKKLLGKKD) are disordered. Residues 219–229 (HIRQARQNQKK) show a composition bias toward polar residues. Residues 241 to 250 (MLKKLLGKKD) show a composition bias toward basic and acidic residues.

This sequence belongs to the PTH family. Monomer.

The protein localises to the cytoplasm. It catalyses the reaction an N-acyl-L-alpha-aminoacyl-tRNA + H2O = an N-acyl-L-amino acid + a tRNA + H(+). Its function is as follows. Hydrolyzes ribosome-free peptidyl-tRNAs (with 1 or more amino acids incorporated), which drop off the ribosome during protein synthesis, or as a result of ribosome stalling. Catalyzes the release of premature peptidyl moieties from peptidyl-tRNA molecules trapped in stalled 50S ribosomal subunits, and thus maintains levels of free tRNAs and 50S ribosomes. The sequence is that of Peptidyl-tRNA hydrolase from Brucella suis (strain ATCC 23445 / NCTC 10510).